The sequence spans 155 residues: HTH-type transcriptional repressor MdtR (155 aa).

In terms of domain architecture, HTH marR-type spans 4–140 (ADQLMSDIQL…AAHITAKLAQ (137 aa)). Positions 54 to 77 (VSEIAERMEVKPSAVTLMADRLEQ) form a DNA-binding region, H-T-H motif.

As to quaternary structure, homodimer.

It is found in the cytoplasm. With respect to regulation, the binding of MdtR to the mdtRP promoter region is severely inhibited by adding excess concentrations of fusidic acid or novobiocin but not by actinomycin or streptomycin. Repressor of the multidrug resistance operon mdtRP. Acts by binding directly to the mdtRP promoter region, leading to the repression of its expression. This chain is HTH-type transcriptional repressor MdtR, found in Bacillus subtilis (strain 168).